Consider the following 587-residue polypeptide: Folylpolyglutamate synthase, mitochondrial (587 aa).

Residues 1-42 (MSRARSHLRAALFLAAASARGITTQVAARRGLSAWPVPQEPS) constitute a mitochondrion transit peptide. At methionine 43 the chain carries N-acetylmethionine. 106 to 109 (GKGS) contacts ATP. Residues serine 130, glutamate 200, and histidine 228 each coordinate Mg(2+). ATP-binding residues include arginine 363 and aspartate 377. Serine 539 is modified (phosphoserine).

It belongs to the folylpolyglutamate synthase family. Monomer. Requires K(+) as cofactor. It depends on NH4(+) as a cofactor.

It is found in the mitochondrion inner membrane. The protein resides in the mitochondrion matrix. The protein localises to the cytoplasm. The enzyme catalyses (6S)-5,6,7,8-tetrahydrofolyl-(gamma-L-Glu)(n) + L-glutamate + ATP = (6S)-5,6,7,8-tetrahydrofolyl-(gamma-L-Glu)(n+1) + ADP + phosphate + H(+). It participates in cofactor biosynthesis; tetrahydrofolylpolyglutamate biosynthesis. Activated by 10 mM sodium bicarbonate. In terms of biological role, catalyzes conversion of folates to polyglutamate derivatives allowing concentration of folate compounds in the cell and the intracellular retention of these cofactors, which are important substrates for most of the folate-dependent enzymes that are involved in one-carbon transfer reactions involved in purine, pyrimidine and amino acid synthesis. Unsubstituted reduced folates are the preferred substrates. Metabolizes methotrexate (MTX) to polyglutamates. The chain is Folylpolyglutamate synthase, mitochondrial (FPGS) from Homo sapiens (Human).